A 401-amino-acid chain; its full sequence is 8-amino-7-oxononanoate synthase (401 aa).

Arginine 24 is a substrate binding site. 111–112 (GF) contributes to the pyridoxal 5'-phosphate binding site. Residue histidine 137 coordinates substrate. Pyridoxal 5'-phosphate is bound by residues serine 183, histidine 211, and threonine 240. Lysine 243 is modified (N6-(pyridoxal phosphate)lysine). Position 357 (threonine 357) interacts with substrate.

This sequence belongs to the class-II pyridoxal-phosphate-dependent aminotransferase family. BioF subfamily. Homodimer. It depends on pyridoxal 5'-phosphate as a cofactor.

The catalysed reaction is 6-carboxyhexanoyl-[ACP] + L-alanine + H(+) = (8S)-8-amino-7-oxononanoate + holo-[ACP] + CO2. It functions in the pathway cofactor biosynthesis; biotin biosynthesis. Functionally, catalyzes the decarboxylative condensation of pimeloyl-[acyl-carrier protein] and L-alanine to produce 8-amino-7-oxononanoate (AON), [acyl-carrier protein], and carbon dioxide. The sequence is that of 8-amino-7-oxononanoate synthase from Xylella fastidiosa (strain M12).